Consider the following 404-residue polypeptide: Synaptic vesicle membrane protein VAT-1 homolog (404 aa).

Residues 1–55 form a disordered region; sequence MSAEREATEAATVAAAAEARAETGAGEGAPSQPPTVEVASDPQPPPAPEASASAS. An N-acetylserine modification is found at Ser-2. Ser-2 is modified (phosphoserine). The span at 9–24 shows a compositional bias: low complexity; the sequence is EAATVAAAAEARAETG. Phosphoserine is present on residues Ser-31 and Ser-40.

It belongs to the zinc-containing alcohol dehydrogenase family. Quinone oxidoreductase subfamily. As to quaternary structure, interacts with MFN1 and MFN2. As to expression, ubiquitously expressed.

The protein resides in the cytoplasm. It localises to the mitochondrion outer membrane. Functionally, plays a part in calcium-regulated keratinocyte activation in epidermal repair mechanisms. Has no effect on cell proliferation. Possesses ATPase activity. May negatively regulate mitochondrial fusion. The polypeptide is Synaptic vesicle membrane protein VAT-1 homolog (Vat1) (Rattus norvegicus (Rat)).